Here is a 190-residue protein sequence, read N- to C-terminus: MYVAMIIRKYFLIIALLLMPWLAIPSVSAADKGGFNTFTDNVAETWRQPEHYDLYVPAITWHARFAYDKEKTDRYNERPWGVGFGQSRWDDKGNWHGLYMMAFKDSFNKWEPIGGYGWEKTWRPLEDDNFRLGLGFTAGVTARDNWNYIPIPVLLPLASIGYGPATFQMTYIPGSYNNGNVYFAWMRFQF.

The signal sequence occupies residues 1 to 29 (MYVAMIIRKYFLIIALLLMPWLAIPSVSA). Active-site residues include His-62, Asp-105, and Ser-106.

Belongs to the lipid A palmitoyltransferase family. In terms of assembly, homodimer.

It is found in the cell outer membrane. It catalyses the reaction a lipid A + a 1,2-diacyl-sn-glycero-3-phosphocholine = a hepta-acyl lipid A + a 2-acyl-sn-glycero-3-phosphocholine. The enzyme catalyses a lipid IVA + a 1,2-diacyl-sn-glycero-3-phosphocholine = a lipid IVB + a 2-acyl-sn-glycero-3-phosphocholine. The catalysed reaction is a lipid IIA + a 1,2-diacyl-sn-glycero-3-phosphocholine = a lipid IIB + a 2-acyl-sn-glycero-3-phosphocholine. In terms of biological role, transfers a fatty acid residue from the sn-1 position of a phospholipid to the N-linked hydroxyfatty acid chain on the proximal unit of lipid A or its precursors. Required for resistance to cationic antimicrobial peptides (CAMPs). Modifications of lipid A with an acyl chain allow to evade host immune defenses by resisting antimicrobial peptides and attenuating the inflammatory response to infection triggered by lipopolysaccharide through the Toll-like receptor 4 (TLR4) signal transduction pathway. This Salmonella typhimurium (strain LT2 / SGSC1412 / ATCC 700720) protein is Lipid A acyltransferase PagP.